The chain runs to 157 residues: Lipoprotein signal peptidase (157 aa).

The next 4 membrane-spanning stretches (helical) occupy residues 10-30 (LVFM…KYAI), 38-58 (SLMV…LLSF), 59-79 (LEGG…IFLI), and 84-104 (LFKT…SNVL). Residues D114 and D131 contribute to the active site. Residues 122–142 (FDFAIFNFADVMIDVGVGVLL) traverse the membrane as a helical segment.

It belongs to the peptidase A8 family.

It is found in the cell inner membrane. The enzyme catalyses Release of signal peptides from bacterial membrane prolipoproteins. Hydrolyzes -Xaa-Yaa-Zaa-|-(S,diacylglyceryl)Cys-, in which Xaa is hydrophobic (preferably Leu), and Yaa (Ala or Ser) and Zaa (Gly or Ala) have small, neutral side chains.. It functions in the pathway protein modification; lipoprotein biosynthesis (signal peptide cleavage). In terms of biological role, this protein specifically catalyzes the removal of signal peptides from prolipoproteins. This chain is Lipoprotein signal peptidase, found in Helicobacter pylori (strain HPAG1).